The primary structure comprises 246 residues: Pyridoxine 5'-phosphate synthase (246 aa).

3-amino-2-oxopropyl phosphate is bound at residue Asn-12. 14 to 15 (DH) serves as a coordination point for 1-deoxy-D-xylulose 5-phosphate. Position 23 (Arg-23) interacts with 3-amino-2-oxopropyl phosphate. His-48 (proton acceptor) is an active-site residue. 1-deoxy-D-xylulose 5-phosphate contacts are provided by Arg-50 and His-55. Glu-75 serves as the catalytic Proton acceptor. Thr-105 lines the 1-deoxy-D-xylulose 5-phosphate pocket. His-196 acts as the Proton donor in catalysis. 3-amino-2-oxopropyl phosphate contacts are provided by residues Gly-197 and 218–219 (GH).

It belongs to the PNP synthase family. As to quaternary structure, homooctamer; tetramer of dimers.

The protein localises to the cytoplasm. It catalyses the reaction 3-amino-2-oxopropyl phosphate + 1-deoxy-D-xylulose 5-phosphate = pyridoxine 5'-phosphate + phosphate + 2 H2O + H(+). Its pathway is cofactor biosynthesis; pyridoxine 5'-phosphate biosynthesis; pyridoxine 5'-phosphate from D-erythrose 4-phosphate: step 5/5. Its function is as follows. Catalyzes the complicated ring closure reaction between the two acyclic compounds 1-deoxy-D-xylulose-5-phosphate (DXP) and 3-amino-2-oxopropyl phosphate (1-amino-acetone-3-phosphate or AAP) to form pyridoxine 5'-phosphate (PNP) and inorganic phosphate. This is Pyridoxine 5'-phosphate synthase from Pseudomonas syringae pv. tomato (strain ATCC BAA-871 / DC3000).